A 334-amino-acid polypeptide reads, in one-letter code: N-acetyl-gamma-glutamyl-phosphate reductase (334 aa).

The active site involves Cys154.

It belongs to the NAGSA dehydrogenase family. Type 1 subfamily.

The protein localises to the cytoplasm. The enzyme catalyses N-acetyl-L-glutamate 5-semialdehyde + phosphate + NADP(+) = N-acetyl-L-glutamyl 5-phosphate + NADPH + H(+). The protein operates within amino-acid biosynthesis; L-arginine biosynthesis; N(2)-acetyl-L-ornithine from L-glutamate: step 3/4. Catalyzes the NADPH-dependent reduction of N-acetyl-5-glutamyl phosphate to yield N-acetyl-L-glutamate 5-semialdehyde. This Photorhabdus laumondii subsp. laumondii (strain DSM 15139 / CIP 105565 / TT01) (Photorhabdus luminescens subsp. laumondii) protein is N-acetyl-gamma-glutamyl-phosphate reductase.